Here is a 329-residue protein sequence, read N- to C-terminus: Succinylglutamate desuccinylase (329 aa).

Residues His53, Glu56, and His148 each contribute to the Zn(2+) site. Glu211 is a catalytic residue.

It belongs to the AspA/AstE family. Succinylglutamate desuccinylase subfamily. Zn(2+) serves as cofactor.

The enzyme catalyses N-succinyl-L-glutamate + H2O = L-glutamate + succinate. It functions in the pathway amino-acid degradation; L-arginine degradation via AST pathway; L-glutamate and succinate from L-arginine: step 5/5. Functionally, transforms N(2)-succinylglutamate into succinate and glutamate. This chain is Succinylglutamate desuccinylase, found in Erwinia tasmaniensis (strain DSM 17950 / CFBP 7177 / CIP 109463 / NCPPB 4357 / Et1/99).